We begin with the raw amino-acid sequence, 147 residues long: Hemoglobin subunit epsilon-1 (147 aa).

In terms of domain architecture, Globin spans 3 to 147; sequence HFTAEEKAAI…VATALAHKYH (145 aa). Heme b contacts are provided by histidine 64 and histidine 93.

It belongs to the globin family. In terms of assembly, heterotetramer of two epsilon chains and two alpha chains. As to expression, red blood cells.

Its function is as follows. Beta-type chain found in early embryos. This is Hemoglobin subunit epsilon-1 (HBE1) from Capra hircus (Goat).